Reading from the N-terminus, the 324-residue chain is Elongation factor P--(R)-beta-lysine ligase (324 aa).

A substrate-binding site is contributed by 75 to 77; it reads SPE. ATP-binding positions include 99-101 and asparagine 108; that span reads RNK. Residue tyrosine 117 participates in substrate binding. 243–244 is an ATP binding site; the sequence is EL. Glutamate 250 serves as a coordination point for substrate. An ATP-binding site is contributed by glycine 299.

This sequence belongs to the class-II aminoacyl-tRNA synthetase family. EpmA subfamily. Homodimer.

The catalysed reaction is D-beta-lysine + L-lysyl-[protein] + ATP = N(6)-((3R)-3,6-diaminohexanoyl)-L-lysyl-[protein] + AMP + diphosphate + H(+). Its function is as follows. With EpmB is involved in the beta-lysylation step of the post-translational modification of translation elongation factor P (EF-P). Catalyzes the ATP-dependent activation of (R)-beta-lysine produced by EpmB, forming a lysyl-adenylate, from which the beta-lysyl moiety is then transferred to the epsilon-amino group of a conserved specific lysine residue in EF-P. This chain is Elongation factor P--(R)-beta-lysine ligase, found in Buchnera aphidicola subsp. Acyrthosiphon pisum (strain 5A).